The chain runs to 199 residues: HTH-type transcriptional repressor NemR (199 aa).

The 61-residue stretch at 7 to 67 (HDTREHLLAT…AMLERHYAAY (61 aa)) folds into the HTH tetR-type domain. A DNA-binding region (H-T-H motif) is located at residues 30–49 (GLSELLKTAEVPKGSFYHYF).

Its function is as follows. Involved in response to both electrophiles and reactive chlorine species (RCS). Represses the transcription of the nemRA-gloA operon by binding to the NemR box. In Escherichia coli O6:H1 (strain CFT073 / ATCC 700928 / UPEC), this protein is HTH-type transcriptional repressor NemR (nemR).